The following is an 82-amino-acid chain: Small ribosomal subunit protein bS16 (82 aa).

This sequence belongs to the bacterial ribosomal protein bS16 family.

The polypeptide is Small ribosomal subunit protein bS16 (Actinobacillus succinogenes (strain ATCC 55618 / DSM 22257 / CCUG 43843 / 130Z)).